A 472-amino-acid chain; its full sequence is FAD-dependent monooxygenase dpmaE (472 aa).

An N-terminal signal peptide occupies residues 1-24 (MSQRQFKVIIIGGSVTGLTLAHSL). Residues Glu-35, Gly-49, and Arg-108 each coordinate FAD. Asn-128 and Asn-179 each carry an N-linked (GlcNAc...) asparagine glycan. Residues Asp-305 and Ala-318 each coordinate FAD. An N-linked (GlcNAc...) asparagine glycan is attached at Asn-369. The helical transmembrane segment at 440 to 460 (LLPLMFTLPLLYFGLSWIVGI) threads the bilayer.

This sequence belongs to the paxM FAD-dependent monooxygenase family. The cofactor is FAD.

It localises to the membrane. Its pathway is secondary metabolite biosynthesis; terpenoid biosynthesis. Its function is as follows. FAD-dependent monooxygenase; part of the gene cluster that mediates the biosynthesis of the diterpenoid pyrones subglutinols A and B. The first step of the pathway is the synthesis of the alpha-pyrone moiety by the polyketide synthase dpmaA via condensation of one acetyl-CoA starter unit with 3 malonyl-CoA units and 2 methylations. The alpha-pyrone is then combined with geranylgeranyl pyrophosphate (GGPP) formed by the GGPP synthase dpmaD through the action of the prenyltransferase dpmaC to yield a linear alpha-pyrone diterpenoid. Subsequent steps in the diterpenoid pyrone biosynthetic pathway involve the decalin core formation, which is initiated by the epoxidation of the C10-C11 olefin by the FAD-dependent oxidoreductase dpmaE, and is followed by a cyclization cascade catalyzed by the terpene cyclase dpmaB. The dehydrogenase dpmaF is then involved in tetrahydrofuran (THF) ring formation at the C5 unit to complete the formation of subglutinols A and B. The polypeptide is FAD-dependent monooxygenase dpmaE (Metarhizium anisopliae (Entomophthora anisopliae)).